A 558-amino-acid chain; its full sequence is Probable rhamnogalacturonase B (558 aa).

Residues 1-21 (MLLDKLSVLSFLGLAPIFAAA) form the signal peptide. Cys42 and Cys68 are oxidised to a cystine. N-linked (GlcNAc...) asparagine glycosylation occurs at Asn145. Catalysis depends on Asp219, which acts as the Proton donor. A disulfide bond links Cys221 and Cys238. N-linked (GlcNAc...) asparagine glycans are attached at residues Asn239 and Asn254. His294 is a catalytic residue. N-linked (GlcNAc...) asparagine glycosylation is present at Asn321. Disulfide bonds link Cys344–Cys350 and Cys372–Cys381. Over residues 503–526 (VGAQEGSTTSAPSFAAPSGAGNSP) the composition is skewed to low complexity. The tract at residues 503–558 (VGAQEGSTTSAPSFAAPSGAGNSPQGPTGASGFGEKGQQGEQGEQGEQGEQGVCYV) is disordered.

Belongs to the glycosyl hydrolase 28 family.

The protein localises to the secreted. It catalyses the reaction Endohydrolysis of alpha-D-GalA-(1-&gt;2)-alpha-L-Rha glycosidic bond in the rhamnogalacturonan I backbone with initial inversion of anomeric configuration releasing oligosaccharides with beta-D-GalA at the reducing end.. Its function is as follows. Pectinolytic enzymes consist of four classes of enzymes: pectine lyase, polygalacturonase, pectin methylesterase and rhamnogalacturonase. Hydrolyzes alpha-D-galacturonopyranosyl-(1,2)-alpha-L-rhamnopyranosyl linkages in the backbone of the hairy regions of pectins. This Aspergillus niger (strain ATCC MYA-4892 / CBS 513.88 / FGSC A1513) protein is Probable rhamnogalacturonase B (rhgB).